Here is a 686-residue protein sequence, read N- to C-terminus: MDQSSRRDESYHETHPGSLDPSHQSHPHPHPHPTLHRPNQGGVYYDSPQHGMFQQPYQQHGGFHQQNELQHLREFSDSHDNAFSHHSYQQDRAGVSTLPNNISHAYGGSHPLAESQHSGGPQSGPRIDPNHHPHQDDPHRPSEPLSHPSSTGSHQGTTHQQYHERSHHLNPQQNRDHADTISYRSSTRFYRSHAPFSRQERPHLHADHHHEGHHAHSHHGEHPHHKEQRHYHGDHMHHHIHHRSPSASQLSHKSHSTLATSPSHVGSKSTASGARYTFGARSQIFGKAQSRESLRESASLSEGEDHVQKRKKAQRAHKKAHTGNIFQLLWEKISHLLLGLQQMILSLTQSLGFETFIFIVVCLNTVILVAQTFTELEIRGEWYFMVLDSIFLSIYVLEAVLKLIALGLEYFYDPWNNLDFFIMVMAVLDFVLLQINSLSYSFYNHSLFRILKVFKSMRALRAIRVLRRLSILTSLHEVAGTLSGSLPSITAILTLMFTCLFLFSVVLRALFQDSDPKRFQNIFTTLFTLFTMLTLDDWSLIYIDNRAQGAWYIIPILMIYIVIQYFIFLNLVIAVLVDNFQMALLKGLEKVKLEQAARVHEKLLDDSLTDLNKADANAQMTEEALKMQLIEGMFGNMTVKQRVLHFQFLQLVAAVEQHQQKFRSQAYVIDELVDMAFEAGDDDYGK.

Positions Met1 to His15 are enriched in basic and acidic residues. 4 disordered regions span residues Met1–Tyr57, Thr97–His177, Asp207–Ala271, and Gln289–Lys318. Topologically, residues Met1–Leu351 are cytoplasmic. Over residues Ser25–Leu35 the composition is skewed to basic residues. A compositionally biased stretch (basic and acidic residues) spans Asp128–Ser142. Over residues His147 to Gln160 the composition is skewed to polar residues. Composition is skewed to basic residues over residues Glu211–Arg229 and His235–Ser244. Over residues Pro245–Ala271 the composition is skewed to polar residues. Basic residues predominate over residues Gln308–Lys318. Residues Gly352 to Phe373 traverse the membrane as a helical segment. Residues Thr374–Trp382 are Extracellular-facing. Residues Tyr383–Ile404 traverse the membrane as a helical segment. At Ala405–Tyr412 the chain is on the cytoplasmic side. The chain crosses the membrane as a helical span at residues Asp413–Ile435. The Extracellular segment spans residues Asn436–Ser446. A helical transmembrane segment spans residues Leu447–Leu469. Residues Ser470 to Pro487 are Cytoplasmic-facing. A helical membrane pass occupies residues Ser488–Leu510. At Phe511–Asn521 the chain is on the extracellular side. An intramembrane region (helical; Pore-forming) is located at residues Ile522 to Thr534. Residues Leu535–Trp551 are Extracellular-facing. A helical transmembrane segment spans residues Tyr552–Val577. Residues Asp578 to Lys686 lie on the Cytoplasmic side of the membrane.

It belongs to the cation channel sperm-associated (TC 1.A.1.19) family. As to quaternary structure, component of the CatSper complex or CatSpermasome composed of the core pore-forming members CATSPER1, CATSPER2, CATSPER3 and CATSPER4 as well as auxiliary members CATSPERB, CATSPERG2, CATSPERD, CATSPERE, CATSPERZ, C2CD6/CATSPERT, SLCO6C1, TMEM249, TMEM262 and EFCAB9. HSPA1 may be an additional auxiliary complex member. The core complex members CATSPER1, CATSPER2, CATSPER3 and CATSPER4 form a heterotetrameric channel. The auxiliary CATSPERB, CATSPERG2, CATSPERD and CATSPERE subunits form a pavilion-like structure over the pore which stabilizes the complex through interactions with CATSPER4, CATSPER3, CATSPER1 and CATSPER2 respectively. SLCO6C1 interacts with CATSPERE, and TMEM262/CATSPERH interacts with CATSPERB, further stabilizing the complex. C2CD6/CATSPERT interacts at least with CATSPERD and is required for targeting the CatSper complex in the flagellar membrane. Interacts with Ca(v)3.3/CACNA1I, leading to suppression of T-type calcium channel activity. Testis-specific.

The protein localises to the cell projection. It is found in the cilium. It localises to the flagellum membrane. It catalyses the reaction Ca(2+)(in) = Ca(2+)(out). With respect to regulation, activated by intracellular alkalinization. In contrast to the human ortholog, not activated by progesterone. Its function is as follows. Pore-forming subunit of the CatSper complex, a sperm-specific voltage-gated calcium channel that plays a central role in sperm cell hyperactivation. Controls calcium entry to mediate the hyperactivated motility, a step needed for sperm motility which is essential late in the preparation of sperm for fertilization. The protein is Cation channel sperm-associated protein 1 (Catsper1) of Mus musculus (Mouse).